Reading from the N-terminus, the 373-residue chain is tRNA-specific 2-thiouridylase MnmA (373 aa).

ATP-binding positions include 12–19 (GMSGGVDS) and M38. The segment at 98-100 (NPD) is interaction with target base in tRNA. The active-site Nucleophile is C103. C103 and C200 are oxidised to a cystine. G127 provides a ligand contact to ATP. The interaction with tRNA stretch occupies residues 150 to 152 (KDQ). The active-site Cysteine persulfide intermediate is the C200. An interaction with tRNA region spans residues 312 to 313 (RY).

It belongs to the MnmA/TRMU family.

The protein localises to the cytoplasm. The catalysed reaction is S-sulfanyl-L-cysteinyl-[protein] + uridine(34) in tRNA + AH2 + ATP = 2-thiouridine(34) in tRNA + L-cysteinyl-[protein] + A + AMP + diphosphate + H(+). In terms of biological role, catalyzes the 2-thiolation of uridine at the wobble position (U34) of tRNA, leading to the formation of s(2)U34. The chain is tRNA-specific 2-thiouridylase MnmA from Streptococcus pneumoniae (strain 70585).